We begin with the raw amino-acid sequence, 1215 residues long: Protein benign gonial cell neoplasm (1215 aa).

Residues 407–439 (TGKTAVHFASELNKANHLRLLLFMGADPYIVDL) form an ANK repeat. Thr898 bears the Phosphothreonine mark.

As to quaternary structure, part of a complex composed of at least mei-P26, bam, bgcn and Sxl; this complex is involved in translational repression of nanos mRNA. Interacts with bam (via C-terminus); the interaction is direct. Interacts with mei-P26; the interaction is direct and does not require bam. Weakly interacts with wh/wuho; this interaction may be required for the function or formation of the mei-P26-bgcn-bam-Sxl complex. Part of a complex composed of at least tut, bam and bgcn; complex formation does not require RNA. Interacts with tut; the interaction is indirect and is mediated by bam. As part of the bam-bgcn-tut complex associates with twin; may recruit the CCR4-NOT1 deadenylation complex to mRNA 3'UTRs to mediate post-transcriptional regulation of expression. In terms of tissue distribution, expressed in testis and in 5-8 germline stem cells of ovaries, immediately adjacent to terminal filament. Expressed in ovarian germline cells throughout the germarium (at protein level).

In terms of biological role, forms a complex with tut and bam involved in 3'UTR-dependent post-transcriptional repression of several 3'-RNA processing factors, which promotes germline stem cell lineage differentiation and mitosis-to-meiosis transition. Part of a complex with bam involved in 3'-UTR-dependent translational repression of a subset of mRNAs, including those for mei-P26, nanos and shg/E-cadherin; may act as a promiscuous RNA-binding protein tethering bam to its target mRNAs. Required for regulating the progression of gonialblast cells through transit amplification and differentiation into gametes. This Drosophila melanogaster (Fruit fly) protein is Protein benign gonial cell neoplasm.